The sequence spans 543 residues: UPF0324 membrane protein RB9488 (543 aa).

A compositionally biased stretch (low complexity) spans 1–22 (MNSNTPSSDNSSPDNVSPDTSD). The tract at residues 1–41 (MNSNTPSSDNSSPDNVSPDTSDMASAGDDSALATPPPRPSL) is disordered. The helical transmembrane segment at 51–73 (WWAIWCAALLLLIAFAAVWIGQP) threads the bilayer. Positions 91–120 (VETAPENAGPSAEAENEAIETENTAPAENA) are disordered. 11 helical membrane-spanning segments follow: residues 160–182 (ISSSWSGILGVFLIIAALFAFAN), 189–211 (AGAFLAAFPVIFLLATLAYWMSG), 221–243 (EYALWALLVGLIISNTVGTPDFL), 270–292 (LALGLPGVFVAWLVTPVVLITTY), 307–329 (NMVISADMSVCGVSAAIATAAAC), 336–358 (LSLSIGLSLGFTVIMMAVMPAVI), 368–390 (GGAWLGGTIDSTGAVAAAGAVLG), 403–422 (IQNILIGVTAFCVAIYWVTF), 437–459 (IWYRFPKFVLGFVSMSILFSILY), 479–496 (TLRGWFFCLAFVSIGLET), and 511–533 (LVLYVCGQSLNLVLTLVMAYLMF).

Belongs to the UPF0324 family.

It localises to the cell membrane. The polypeptide is UPF0324 membrane protein RB9488 (Rhodopirellula baltica (strain DSM 10527 / NCIMB 13988 / SH1)).